The chain runs to 566 residues: Putative sensory transducer protein YvaQ (566 aa).

The signal sequence occupies residues 1–31 (MRLTISRKFSLVFLTLILINLLVGGIGVLNM). A coiled-coil region spans residues 74–110 (DKSKMDTLDQEMNQIMEDINQKLDNYEKTISTDKEQK). The helical transmembrane segment at 186-206 (IYTALLVAASILISIFIWLYI) threads the bilayer. The 54-residue stretch at 208–261 (RNIVKPIIRMKESANHIAEGDLSNDMEALNSKDELGDLNEALQKMVGNLRDIVG) folds into the HAMP domain. In terms of domain architecture, Methyl-accepting transducer spans 280 to 530 (ATNETRSGSK…ESAAGIEETF (251 aa)). A coiled-coil region spans residues 536–566 (SAHSMDQVLLNAEELEQLANELNEKMGQFTI).

It belongs to the methyl-accepting chemotaxis (MCP) protein family.

It is found in the cell membrane. Its function is as follows. Chemotactic-signal transducers respond to changes in the concentration of attractants and repellents in the environment, transduce a signal from the outside to the inside of the cell, and facilitate sensory adaptation through the variation of the level of methylation. Attractants increase the level of methylation while repellents decrease the level of methylation. This is Putative sensory transducer protein YvaQ (yvaQ) from Bacillus subtilis (strain 168).